A 74-amino-acid polypeptide reads, in one-letter code: Cytochrome b559 subunit alpha (74 aa).

A helical membrane pass occupies residues 22 to 36 (VIHTVTIPSLFVAGW). Residue histidine 24 participates in heme binding.

This sequence belongs to the PsbE/PsbF family. In terms of assembly, heterodimer of an alpha subunit and a beta subunit. PSII is composed of 1 copy each of membrane proteins PsbA, PsbB, PsbC, PsbD, PsbE, PsbF, PsbH, PsbI, PsbJ, PsbK, PsbL, PsbM, PsbT, PsbX, PsbY, PsbZ, Psb30/Ycf12, at least 3 peripheral proteins of the oxygen-evolving complex and a large number of cofactors. It forms dimeric complexes. Requires heme b as cofactor.

Its subcellular location is the plastid. The protein resides in the cyanelle thylakoid membrane. Functionally, this b-type cytochrome is tightly associated with the reaction center of photosystem II (PSII). PSII is a light-driven water:plastoquinone oxidoreductase that uses light energy to abstract electrons from H(2)O, generating O(2) and a proton gradient subsequently used for ATP formation. It consists of a core antenna complex that captures photons, and an electron transfer chain that converts photonic excitation into a charge separation. In Cyanophora paradoxa, this protein is Cytochrome b559 subunit alpha.